A 101-amino-acid polypeptide reads, in one-letter code: Large ribosomal subunit protein uL23 (101 aa).

It belongs to the universal ribosomal protein uL23 family. Part of the 50S ribosomal subunit. Contacts protein L29, and trigger factor when it is bound to the ribosome.

Its function is as follows. One of the early assembly proteins it binds 23S rRNA. One of the proteins that surrounds the polypeptide exit tunnel on the outside of the ribosome. Forms the main docking site for trigger factor binding to the ribosome. The sequence is that of Large ribosomal subunit protein uL23 from Rhodococcus erythropolis (strain PR4 / NBRC 100887).